A 99-amino-acid polypeptide reads, in one-letter code: Transmembrane protein 14A (99 aa).

Transmembrane regions (helical) follow at residues 1 to 21 (MDLI…LGYK), 24 to 44 (GGVL…YGAY), and 79 to 99 (PAGL…LLLL).

Belongs to the TMEM14 family.

Its subcellular location is the mitochondrion membrane. The protein localises to the endoplasmic reticulum membrane. In terms of biological role, inhibits apoptosis via negative regulation of the mitochondrial outer membrane permeabilization involved in apoptotic signaling pathway. The protein is Transmembrane protein 14A (TMEM14A) of Bos taurus (Bovine).